We begin with the raw amino-acid sequence, 129 residues long: Fluoride-specific ion channel FluC (129 aa).

4 helical membrane-spanning segments follow: residues methionine 1–alanine 21, glycine 35–isoleucine 55, leucine 71–asparagine 91, and alanine 105–alanine 125. Positions 79 and 82 each coordinate Na(+).

This sequence belongs to the fluoride channel Fluc/FEX (TC 1.A.43) family.

Its subcellular location is the cell inner membrane. It catalyses the reaction fluoride(in) = fluoride(out). Na(+) is not transported, but it plays an essential structural role and its presence is essential for fluoride channel function. In terms of biological role, fluoride-specific ion channel. Important for reducing fluoride concentration in the cell, thus reducing its toxicity. The chain is Fluoride-specific ion channel FluC from Chlorobium phaeobacteroides (strain DSM 266 / SMG 266 / 2430).